A 450-amino-acid polypeptide reads, in one-letter code: MELKEKRVFVAGLGVSGVALCRVLVNLGANVIAYDRKNEIALKEALEELKDLPVEIKLGEFKEEFLKGIELVVLSPGISLESEIVKKAKDMGLEILGEVELAYRLSKAPIYAITGTNGKTTTTSLLGEMFRNAGRKVYVAGNIGYPLIYAALEAGPNDHIVAEISSFQLETVKEFRPKISCIINITPDHLDRHKTFENYANIKGRIFENQREEEYVVLNYDDPVTWGLKERAKAKVFPFSRKKVLENGAYVKEGFLYLQNKKVIKVEDIYIPGEHNLENALAASSVAYLSGIEVDAIETTLRTFKGVEHRIEFVAEIEGIKFYNDSKGTNPDASIKAIQALKTPIVLIAGGYDKGSEFDEFVKTFDKKVRKLILIGQTAQKIKKTALKYSYPEEDIFLVDSLEEAVRKAYEVAEKGDSVLLSPACASWDMFKNFEERGKAFKKAVMDLRR.

115 to 121 (GTNGKTT) serves as a coordination point for ATP.

Belongs to the MurCDEF family.

Its subcellular location is the cytoplasm. It catalyses the reaction UDP-N-acetyl-alpha-D-muramoyl-L-alanine + D-glutamate + ATP = UDP-N-acetyl-alpha-D-muramoyl-L-alanyl-D-glutamate + ADP + phosphate + H(+). Its pathway is cell wall biogenesis; peptidoglycan biosynthesis. In terms of biological role, cell wall formation. Catalyzes the addition of glutamate to the nucleotide precursor UDP-N-acetylmuramoyl-L-alanine (UMA). This Caldanaerobacter subterraneus subsp. tengcongensis (strain DSM 15242 / JCM 11007 / NBRC 100824 / MB4) (Thermoanaerobacter tengcongensis) protein is UDP-N-acetylmuramoylalanine--D-glutamate ligase.